The following is a 492-amino-acid chain: Transcription factor IIIB 60 kDa subunit (492 aa).

A TFIIB-type zinc finger spans residues 1–30; that stretch reads MGCPNCGSTTFESDTASGNTYCTQCGVVVE. Residues Cys3, Cys6, Cys22, and Cys25 each coordinate Zn(2+). The disordered stretch occupies residues 440–468; sequence QPRKRRRYRPRDSTSDGIADTAAESAKEM.

Belongs to the TFIIB family. As to quaternary structure, TFIIIB comprises the TATA-binding protein (TBP), the B-related factor (BRF) and a third subunit (Potential). Interacts with maf1.

The protein resides in the nucleus. In terms of biological role, general activator of RNA polymerase III transcription. This chain is Transcription factor IIIB 60 kDa subunit (brf1), found in Schizosaccharomyces pombe (strain 972 / ATCC 24843) (Fission yeast).